We begin with the raw amino-acid sequence, 316 residues long: Ribosomal RNA small subunit methyltransferase H (316 aa).

S-adenosyl-L-methionine is bound by residues Ser35 to His37, Asp55, Phe84, Asp105, and Gln112.

The protein belongs to the methyltransferase superfamily. RsmH family.

It is found in the cytoplasm. The enzyme catalyses cytidine(1402) in 16S rRNA + S-adenosyl-L-methionine = N(4)-methylcytidine(1402) in 16S rRNA + S-adenosyl-L-homocysteine + H(+). Its function is as follows. Specifically methylates the N4 position of cytidine in position 1402 (C1402) of 16S rRNA. This is Ribosomal RNA small subunit methyltransferase H from Streptococcus dysgalactiae subsp. equisimilis (strain GGS_124).